The following is an 89-amino-acid chain: UPF0297 protein SEQ_2150 (89 aa).

It belongs to the UPF0297 family.

The chain is UPF0297 protein SEQ_2150 from Streptococcus equi subsp. equi (strain 4047).